Here is a 202-residue protein sequence, read N- to C-terminus: Peptide methionine sulfoxide reductase B1, chloroplastic (202 aa).

The N-terminal 63 residues, 1–63, are a transit peptide targeting the chloroplast; sequence MASSTRLTII…SSSPKPDNVQ (63 aa). Residues 48–67 are disordered; it reads YSMGSSSSSPKPDNVQEAEK. A MsrB domain is found at 75 to 197; the sequence is ENEWKKRLTP…NSAALKLNAL (123 aa). Residues C114, C117, C163, and C166 each contribute to the Zn(2+) site. Residue C186 is the Nucleophile of the active site.

The protein belongs to the MsrB Met sulfoxide reductase family. Requires Zn(2+) as cofactor. Expressed at low levels in stems, leaves, floral buds, flowers and siliques (at protein level).

The protein localises to the plastid. The protein resides in the chloroplast. The catalysed reaction is L-methionyl-[protein] + [thioredoxin]-disulfide + H2O = L-methionyl-(R)-S-oxide-[protein] + [thioredoxin]-dithiol. Functionally, catalyzes the reduction of methionine sulfoxide (MetSO) to methionine in proteins. Specifically reduces the MetSO R-enantiomer. Plays a protective role against oxidative stress by restoring activity to proteins that have been inactivated by methionine oxidation. May play an essential function in association with MSRB2 in maintaining vegetative growth during environmental constraints, through the preservation of photosynthetic antennae. MSRB1 and MSRB2 account for most of the leaf peptide MSR capacity. The sequence is that of Peptide methionine sulfoxide reductase B1, chloroplastic from Arabidopsis thaliana (Mouse-ear cress).